A 153-amino-acid polypeptide reads, in one-letter code: Protein SprT-like (153 aa).

Residues 7–145 (QTLVEKISIV…VCGKCHGRLS (139 aa)) form the SprT-like domain. Position 67 (His67) interacts with Zn(2+). Glu68 is a catalytic residue. His71 is a binding site for Zn(2+).

It belongs to the SprT family. It depends on Zn(2+) as a cofactor.

The protein resides in the cytoplasm. This Enterococcus faecalis (strain ATCC 700802 / V583) protein is Protein SprT-like.